A 121-amino-acid chain; its full sequence is MARVAGVDIPRDKRVVISLTYVFGIGKSTAAKILETAGVDENTRVRDLTEEELGRIREAVEGYQVEGDLRREVSLNIKRLIEIGSYRGIRHRRGLPVRGQNSKNNARTRKGPKRTVANKKK.

The disordered stretch occupies residues arginine 92–lysine 121. Residues alanine 106 to lysine 121 are compositionally biased toward basic residues.

Belongs to the universal ribosomal protein uS13 family. In terms of assembly, part of the 30S ribosomal subunit. Forms a loose heterodimer with protein S19. Forms two bridges to the 50S subunit in the 70S ribosome.

Located at the top of the head of the 30S subunit, it contacts several helices of the 16S rRNA. In the 70S ribosome it contacts the 23S rRNA (bridge B1a) and protein L5 of the 50S subunit (bridge B1b), connecting the 2 subunits; these bridges are implicated in subunit movement. Contacts the tRNAs in the A and P-sites. The polypeptide is Small ribosomal subunit protein uS13 (Shouchella clausii (strain KSM-K16) (Alkalihalobacillus clausii)).